We begin with the raw amino-acid sequence, 341 residues long: tRNA N6-adenosine threonylcarbamoyltransferase (341 aa).

Residues His111 and His115 each contribute to the Fe cation site. Substrate contacts are provided by residues 134–138 (LVSGG), Asp167, Gly180, and Asn276. Asp304 is a binding site for Fe cation.

This sequence belongs to the KAE1 / TsaD family. The cofactor is Fe(2+).

It localises to the cytoplasm. The enzyme catalyses L-threonylcarbamoyladenylate + adenosine(37) in tRNA = N(6)-L-threonylcarbamoyladenosine(37) in tRNA + AMP + H(+). Functionally, required for the formation of a threonylcarbamoyl group on adenosine at position 37 (t(6)A37) in tRNAs that read codons beginning with adenine. Is involved in the transfer of the threonylcarbamoyl moiety of threonylcarbamoyl-AMP (TC-AMP) to the N6 group of A37, together with TsaE and TsaB. TsaD likely plays a direct catalytic role in this reaction. This chain is tRNA N6-adenosine threonylcarbamoyltransferase, found in Pseudomonas putida (strain ATCC 700007 / DSM 6899 / JCM 31910 / BCRC 17059 / LMG 24140 / F1).